The chain runs to 382 residues: Alkanesulfonate monooxygenase (382 aa).

The protein belongs to the SsuD family. In terms of assembly, homotetramer.

The catalysed reaction is an alkanesulfonate + FMNH2 + O2 = an aldehyde + FMN + sulfite + H2O + 2 H(+). Functionally, catalyzes the desulfonation of aliphatic sulfonates. In Buttiauxella sp. (strain PNBS), this protein is Alkanesulfonate monooxygenase.